The primary structure comprises 298 residues: ATP synthase gamma chain (298 aa).

Belongs to the ATPase gamma chain family. As to quaternary structure, F-type ATPases have 2 components, CF(1) - the catalytic core - and CF(0) - the membrane proton channel. CF(1) has five subunits: alpha(3), beta(3), gamma(1), delta(1), epsilon(1). CF(0) has three main subunits: a, b and c.

The protein resides in the cell inner membrane. Its function is as follows. Produces ATP from ADP in the presence of a proton gradient across the membrane. The gamma chain is believed to be important in regulating ATPase activity and the flow of protons through the CF(0) complex. In Francisella tularensis subsp. tularensis (strain WY96-3418), this protein is ATP synthase gamma chain.